The sequence spans 339 residues: Anthranilate phosphoribosyltransferase (339 aa).

5-phospho-alpha-D-ribose 1-diphosphate-binding positions include Gly-79, 82 to 83, Thr-87, 89 to 92, 107 to 115, and Ser-119; these read GD, NVST, and KHGNRAVSS. Position 79 (Gly-79) interacts with anthranilate. Residue Ser-91 coordinates Mg(2+). Asn-110 serves as a coordination point for anthranilate. Arg-165 is a binding site for anthranilate. The Mg(2+) site is built by Asp-224 and Glu-225.

The protein belongs to the anthranilate phosphoribosyltransferase family. Homodimer. Mg(2+) serves as cofactor.

The catalysed reaction is N-(5-phospho-beta-D-ribosyl)anthranilate + diphosphate = 5-phospho-alpha-D-ribose 1-diphosphate + anthranilate. Its pathway is amino-acid biosynthesis; L-tryptophan biosynthesis; L-tryptophan from chorismate: step 2/5. Functionally, catalyzes the transfer of the phosphoribosyl group of 5-phosphorylribose-1-pyrophosphate (PRPP) to anthranilate to yield N-(5'-phosphoribosyl)-anthranilate (PRA). The polypeptide is Anthranilate phosphoribosyltransferase (Geobacillus stearothermophilus (Bacillus stearothermophilus)).